The sequence spans 62 residues: Small, acid-soluble spore protein H 1 (62 aa).

It belongs to the SspH family.

The protein resides in the spore core. The protein is Small, acid-soluble spore protein H 1 of Clostridium botulinum (strain ATCC 19397 / Type A).